The following is a 492-amino-acid chain: N-succinylglutamate 5-semialdehyde dehydrogenase (492 aa).

Residue 220–225 (GSANTG) participates in NAD(+) binding. Catalysis depends on residues Glu243 and Cys277.

The protein belongs to the aldehyde dehydrogenase family. AstD subfamily.

It catalyses the reaction N-succinyl-L-glutamate 5-semialdehyde + NAD(+) + H2O = N-succinyl-L-glutamate + NADH + 2 H(+). It functions in the pathway amino-acid degradation; L-arginine degradation via AST pathway; L-glutamate and succinate from L-arginine: step 4/5. In terms of biological role, catalyzes the NAD-dependent reduction of succinylglutamate semialdehyde into succinylglutamate. The polypeptide is N-succinylglutamate 5-semialdehyde dehydrogenase (Escherichia coli O9:H4 (strain HS)).